Here is a 121-residue protein sequence, read N- to C-terminus: Small ribosomal subunit protein bS6 (121 aa).

Positions 96-121 are disordered; it reads DTGPSSMMKTVEREDARKTQQAEYQA. Positions 105–115 are enriched in basic and acidic residues; the sequence is TVEREDARKTQ.

The protein belongs to the bacterial ribosomal protein bS6 family.

Functionally, binds together with bS18 to 16S ribosomal RNA. This chain is Small ribosomal subunit protein bS6, found in Albidiferax ferrireducens (strain ATCC BAA-621 / DSM 15236 / T118) (Rhodoferax ferrireducens).